The following is a 1008-amino-acid chain: Histone deacetylase complex subunit SAP130-A (1008 aa).

A compositionally biased stretch (polar residues) spans 1 to 31 (MNSQQFPRQAASMPSPQVSNSGASVGQNVQG). 4 disordered regions span residues 1-44 (MNSQ…DVQS), 113-134 (SKST…SAVP), 415-435 (IQSD…HRAS), and 617-720 (TPGG…PATI). Residues 35 to 44 (EVARDMDVQS) are compositionally biased toward basic and acidic residues. Polar residues predominate over residues 618–644 (PGGTTVMQSHSQSPGIGSSPAQGSSPR). Residues 678 to 697 (ADQPSAAASLPSSHHPAAAV) show a composition bias toward low complexity.

It belongs to the SAP130 family.

It is found in the nucleus. Its function is as follows. Acts as a transcriptional repressor. The protein is Histone deacetylase complex subunit SAP130-A (sap130-a) of Xenopus laevis (African clawed frog).